The chain runs to 108 residues: ACAHLCKEADLKTALEACKAADSFNFKTFFHTLGFASKXXDDVKKXXXVLDQDASGFLEVEELKLFLQNFCPKXXXLTDAETKAFLKAGDADGDGMLGLDEFAVLVKQ.

Position 1 is an N-acetylalanine (Ala1). EF-hand domains are found at residues 38–73 and 77–108; these read KXXDDVKKXXXVLDQDASGFLEVEELKLFLQNFCPK and LTDAETKAFLKAGDADGDGMLGLDEFAVLVKQ. Positions 51, 53, 55, 57, 59, 62, 90, 92, 94, 96, and 101 each coordinate Ca(2+).

The protein belongs to the parvalbumin family.

In muscle, parvalbumin is thought to be involved in relaxation after contraction. It binds two calcium ions. The protein is Parvalbumin beta 1 of Oncorhynchus mykiss (Rainbow trout).